Reading from the N-terminus, the 189-residue chain is NADH-quinone oxidoreductase subunit B (189 aa).

Cysteine 39, cysteine 40, cysteine 104, and cysteine 135 together coordinate [4Fe-4S] cluster.

Belongs to the complex I 20 kDa subunit family. In terms of assembly, NDH-1 is composed of 14 different subunits. Subunits NuoB, C, D, E, F, and G constitute the peripheral sector of the complex. The cofactor is [4Fe-4S] cluster.

It is found in the cell inner membrane. It catalyses the reaction a quinone + NADH + 5 H(+)(in) = a quinol + NAD(+) + 4 H(+)(out). Functionally, NDH-1 shuttles electrons from NADH, via FMN and iron-sulfur (Fe-S) centers, to quinones in the respiratory chain. The immediate electron acceptor for the enzyme in this species is believed to be a menaquinone. Couples the redox reaction to proton translocation (for every two electrons transferred, four hydrogen ions are translocated across the cytoplasmic membrane), and thus conserves the redox energy in a proton gradient. In Chlorobaculum parvum (strain DSM 263 / NCIMB 8327) (Chlorobium vibrioforme subsp. thiosulfatophilum), this protein is NADH-quinone oxidoreductase subunit B.